The primary structure comprises 971 residues: Exportin-2 (971 aa).

Positions 29-102 (AEKFLESVEG…KANIVNLMLS (74 aa)) constitute an Importin N-terminal domain.

The protein belongs to the XPO2/CSE1 family. In terms of assembly, interacts with cftr.

It localises to the cytoplasm. The protein localises to the nucleus. In terms of biological role, export receptor for importin alpha. Mediates importin-alpha re-export from the nucleus to the cytoplasm after import substrates have been released into the nucleoplasm. Negatively regulates fluid secretion and plays a role in fluid homeostasis by down-regulating cftr activity. The polypeptide is Exportin-2 (cse1l) (Oreochromis niloticus (Nile tilapia)).